Reading from the N-terminus, the 482-residue chain is BTB/POZ domain-containing protein 6-B (482 aa).

A BTB domain is found at 80-150 (ADVHFVVGPP…MYSDEIELEA (71 aa)).

As to quaternary structure, interacts with cul3. Interacts (via BTB domain) with zbtb16/plzf. In embryos, expressed in the cranial ganglia.

The protein localises to the cytoplasm. The protein resides in the nucleus. Functionally, adapter protein for the cul3 E3 ubiquitin-protein ligase complex. Promotes the export of zbtb16/plzf from the nucleus to the cytoplasm and targets zbtb16/plzf for ubiquitination and degradation. Up-regulates neurog1 expression and antagonizes zbtb16/plzf, to promote neurogenesis. The sequence is that of BTB/POZ domain-containing protein 6-B (btbd6b) from Danio rerio (Zebrafish).